The sequence spans 281 residues: Elongation factor Ts (281 aa).

Residues 79 to 82 (TDFV) form an involved in Mg(2+) ion dislocation from EF-Tu region.

This sequence belongs to the EF-Ts family.

Its subcellular location is the cytoplasm. Associates with the EF-Tu.GDP complex and induces the exchange of GDP to GTP. It remains bound to the aminoacyl-tRNA.EF-Tu.GTP complex up to the GTP hydrolysis stage on the ribosome. This chain is Elongation factor Ts, found in Wolbachia pipientis subsp. Culex pipiens (strain wPip).